Here is a 542-residue protein sequence, read N- to C-terminus: Sensory neuron membrane protein 2 (542 aa).

The Extracellular segment spans residues 1-487 (MMVMNTELRQ…MKVLTLLDIV (487 aa)). Residues Asn33, Asn128, Asn238, and Asn274 are each glycosylated (N-linked (GlcNAc...) asparagine). Cystine bridges form between Cys283-Cys351, Cys312-Cys378, and Cys353-Cys367. The helical transmembrane segment at 488–508 (QWVMIGSGLLLAIIMPIVYFI) threads the bilayer. Topologically, residues 509–542 (KRRPSSGSITPTLTTTTSTVSISDGGGLGGNPQK) are cytoplasmic.

This sequence belongs to the CD36 family. Detected in the antenna, legs and wings. Higher levels of expression detected in male compared to female.

Its subcellular location is the cell membrane. Plays an olfactory role that is not restricted to pheromone sensitivity. This chain is Sensory neuron membrane protein 2, found in Aedes aegypti (Yellowfever mosquito).